A 113-amino-acid chain; its full sequence is Photosystem II reaction center Psb28 protein (113 aa).

This sequence belongs to the Psb28 family. Part of the photosystem II complex.

It is found in the cellular thylakoid membrane. The chain is Photosystem II reaction center Psb28 protein from Prochlorococcus marinus (strain NATL1A).